A 610-amino-acid chain; its full sequence is UvrABC system protein C (610 aa).

In terms of domain architecture, GIY-YIG spans 16 to 94 (SQPGVYRMYD…IKLYQPRYNV (79 aa)). The UVR domain occupies 204 to 239 (DQVLTQLISRMETASQNLEFEEAARIRDQIQAVRRV).

It belongs to the UvrC family. As to quaternary structure, interacts with UvrB in an incision complex.

It is found in the cytoplasm. Functionally, the UvrABC repair system catalyzes the recognition and processing of DNA lesions. UvrC both incises the 5' and 3' sides of the lesion. The N-terminal half is responsible for the 3' incision and the C-terminal half is responsible for the 5' incision. This Escherichia coli O45:K1 (strain S88 / ExPEC) protein is UvrABC system protein C.